A 102-amino-acid polypeptide reads, in one-letter code: Small ribosomal subunit protein bS20 (102 aa).

Belongs to the bacterial ribosomal protein bS20 family.

Its function is as follows. Binds directly to 16S ribosomal RNA. The polypeptide is Small ribosomal subunit protein bS20 (Gloeobacter violaceus (strain ATCC 29082 / PCC 7421)).